The following is a 362-amino-acid chain: Probable aromatic amino acid hydroxylase (362 aa).

Residues H200 and H205 each contribute to the Fe cation site.

Belongs to the biopterin-dependent aromatic amino acid hydroxylase family. Fe(2+) serves as cofactor.

This Chlamydia pneumoniae (Chlamydophila pneumoniae) protein is Probable aromatic amino acid hydroxylase.